Here is a 125-residue protein sequence, read N- to C-terminus: Small ribosomal subunit protein eS6 (125 aa).

Belongs to the eukaryotic ribosomal protein eS6 family.

The sequence is that of Small ribosomal subunit protein eS6 from Pyrococcus abyssi (strain GE5 / Orsay).